We begin with the raw amino-acid sequence, 140 residues long: Austinoid biosynthesis clusters protein S (140 aa).

The protein belongs to the trt14 isomerase family. Homodimer.

Its pathway is secondary metabolite biosynthesis; terpenoid biosynthesis. Part of the gene cluster B that mediates the biosynthesis of austinol and dehydroaustinol, two fungal meroterpenoids. The first step of the pathway is the synthesis of 3,5-dimethylorsellinic acid by the polyketide synthase ausA. 3,5-dimethylorsellinic acid is then prenylated by the polyprenyl transferase ausN. Further epoxidation by the FAD-dependent monooxygenase ausM and cyclization by the probable terpene cyclase ausL lead to the formation of protoaustinoid A. Protoaustinoid A is then oxidized to spiro-lactone preaustinoid A3 by the combined action of the FAD-binding monooxygenases ausB and ausC, and the dioxygenase ausE. Acid-catalyzed keto-rearrangement and ring contraction of the tetraketide portion of preaustinoid A3 by ausJ lead to the formation of preaustinoid A4. The aldo-keto reductase ausK, with the help of ausH, is involved in the next step by transforming preaustinoid A4 into isoaustinone which is in turn hydroxylated by the P450 monooxygenase ausI to form austinolide. Finally, the cytochrome P450 monooxygenase ausG modifies austinolide to austinol. Austinol can be further modified to dehydroaustinol which forms a diffusible complex with diorcinol that initiates conidiation. Due to genetic rearrangements of the clusters and the subsequent loss of some enzymes, the end products of the Emericella nidulans austinoid biosynthesis clusters are austinol and dehydroaustinol, even if additional enzymes, such as the O-acetyltransferase ausQ and the cytochrome P450 monooxygenase ausR are still functional. AusS is necessary for austinoids production and may play a possible function as a regulator. The chain is Austinoid biosynthesis clusters protein S from Emericella nidulans (strain FGSC A4 / ATCC 38163 / CBS 112.46 / NRRL 194 / M139) (Aspergillus nidulans).